A 312-amino-acid chain; its full sequence is Very-long-chain 3-oxoacyl-CoA reductase (312 aa).

A helical transmembrane segment spans residues 4-24 (ALPAAGFLYWVGASTIAYLTL). 50 to 79 (GEWAVVTGGTDGIGKSYAEELAKRGMKIVL) contacts NADP(+). The next 2 membrane-spanning stretches (helical) occupy residues 182–202 (GVILNISSASGMLPVPLLTVY) and 271–291 (GYVIHAIMGSINSILPRWIYF). Ser-189 contributes to the substrate binding site. The active-site Proton acceptor is Tyr-202. A Di-lysine motif motif is present at residues 308–312 (KTKKN).

It belongs to the short-chain dehydrogenases/reductases (SDR) family. 17-beta-HSD 3 subfamily.

Its subcellular location is the endoplasmic reticulum membrane. The enzyme catalyses a very-long-chain (3R)-3-hydroxyacyl-CoA + NADP(+) = a very-long-chain 3-oxoacyl-CoA + NADPH + H(+). The catalysed reaction is 17beta-estradiol + NAD(+) = estrone + NADH + H(+). It carries out the reaction 17beta-estradiol + NADP(+) = estrone + NADPH + H(+). It catalyses the reaction 3-oxooctadecanoyl-CoA + NADPH + H(+) = (3R)-hydroxyoctadecanoyl-CoA + NADP(+). The enzyme catalyses (7Z,10Z,13Z,16Z)-3-oxodocosatetraenoyl-CoA + NADPH + H(+) = (3R)-hydroxy-(7Z,10Z,13Z,16Z)-docosatetraenoyl-CoA + NADP(+). The catalysed reaction is 3-oxo-(7Z,10Z,13Z,16Z,19Z)-docosapentaenoyl-CoA + NADPH + H(+) = (3R)-hydroxy-(7Z,10Z,13Z,16Z,19Z)-docosapentaenoyl-CoA + NADP(+). It carries out the reaction (8Z,11Z,14Z)-3-oxoeicosatrienoyl-CoA + NADPH + H(+) = (3R)-hydroxy-(8Z,11Z,14Z)-eicosatrienoyl-CoA + NADP(+). It functions in the pathway lipid metabolism; fatty acid biosynthesis. It participates in steroid biosynthesis; estrogen biosynthesis. Its function is as follows. Catalyzes the second of the four reactions of the long-chain fatty acids elongation cycle. This endoplasmic reticulum-bound enzymatic process, allows the addition of two carbons to the chain of long- and very long-chain fatty acids/VLCFAs per cycle. This enzyme has a 3-ketoacyl-CoA reductase activity, reducing 3-ketoacyl-CoA to 3-hydroxyacyl-CoA, within each cycle of fatty acid elongation. Thereby, it may participate in the production of VLCFAs of different chain lengths that are involved in multiple biological processes as precursors of membrane lipids and lipid mediators. May also catalyze the transformation of estrone (E1) into estradiol (E2) and play a role in estrogen formation. This Rattus norvegicus (Rat) protein is Very-long-chain 3-oxoacyl-CoA reductase.